We begin with the raw amino-acid sequence, 152 residues long: D-aminoacyl-tRNA deacylase (152 aa).

A Gly-cisPro motif, important for rejection of L-amino acids motif is present at residues 137–138; that stretch reads GP.

Belongs to the DTD family. As to quaternary structure, homodimer.

It localises to the cytoplasm. The catalysed reaction is glycyl-tRNA(Ala) + H2O = tRNA(Ala) + glycine + H(+). It carries out the reaction a D-aminoacyl-tRNA + H2O = a tRNA + a D-alpha-amino acid + H(+). Its function is as follows. An aminoacyl-tRNA editing enzyme that deacylates mischarged D-aminoacyl-tRNAs. Also deacylates mischarged glycyl-tRNA(Ala), protecting cells against glycine mischarging by AlaRS. Acts via tRNA-based rather than protein-based catalysis; rejects L-amino acids rather than detecting D-amino acids in the active site. By recycling D-aminoacyl-tRNA to D-amino acids and free tRNA molecules, this enzyme counteracts the toxicity associated with the formation of D-aminoacyl-tRNA entities in vivo and helps enforce protein L-homochirality. This chain is D-aminoacyl-tRNA deacylase, found in Methylibium petroleiphilum (strain ATCC BAA-1232 / LMG 22953 / PM1).